The chain runs to 350 residues: Protein MGF 360-12L (350 aa).

An ANK repeat occupies 57–89 (DLNTALVKAVRENNYNLIKLFAEWGANINYGLV).

The protein belongs to the asfivirus MGF 360 family.

Functionally, plays a role in virus cell tropism, and may be required for efficient virus replication in macrophages. This African swine fever virus (isolate Warthog/Namibia/Wart80/1980) (ASFV) protein is Protein MGF 360-12L.